The sequence spans 710 residues: Choline transporter-like protein 2 (710 aa).

Over 1 to 34 (MEDDGKSPPDSAYGEPKKYDPNFKGPIQNRGCTD) the chain is Cytoplasmic. Residues 35–55 (ILCCILIVLGIIAYVAVGIVA) traverse the membrane as a helical segment. The Extracellular portion of the chain corresponds to 56 to 236 (WTYGDPRKVI…KIFEDYTVSW (181 aa)). Residues Asn147, Asn190, and Asn204 are each glycosylated (N-linked (GlcNAc...) asparagine). The chain crosses the membrane as a helical span at residues 237–257 (YWIIIGLIIAMVISLIFVVLL). Topologically, residues 258-260 (RFL) are cytoplasmic. A helical transmembrane segment spans residues 261–281 (AGIMVWVMIVLVIAVMGYGIF). Residues 282-319 (HCYMEYARLKGQSGSDVTLKDIGFQTDIRVYLHLRQTW) are Extracellular-facing. The helical transmembrane segment at 320–340 (LAFMIILCILEVIVILLLIFL) threads the bilayer. At 341–368 (RKRIMIAIALIKEASRAVGFVMSSLVFP) the chain is on the cytoplasmic side. The chain crosses the membrane as a helical span at residues 369–389 (LFTFLLVCLCIAYWAITAVFL). Over 390–458 (STSNEAVYKV…FQIYNAFMFL (69 aa)) the chain is Extracellular. N-linked (GlcNAc...) asparagine glycosylation is found at Asn401, Asn418, and Asn421. Residues 459 to 481 (WLANFVIALGQVTLAGAFASYYW) form a helical membrane-spanning segment. The Cytoplasmic segment spans residues 482–508 (AFKKPDDMPAFPIFSSLGRALRYHTGS). A helical membrane pass occupies residues 509 to 529 (LAFGSLILAIVQMIRILLEYL). The Extracellular segment spans residues 530-567 (DHKLKGADNKCARFLLCCLKCCFWCLEKFIKFLNRNAY). The helical transmembrane segment at 568-588 (IMIAIYGTNFCTSARNAFFLL) threads the bilayer. At 589-603 (MRNIIRVAVLDKVTD) the chain is on the cytoplasmic side. The chain crosses the membrane as a helical span at residues 604–624 (FLLFLGKLLVVGCVGILAFFF). Residues 625 to 642 (FSRRIQIVQDTAPTLNYY) lie on the Extracellular side of the membrane. The helical transmembrane segment at 643–663 (WVPILTVILGSYLIAHGFFSV) threads the bilayer. The Cytoplasmic segment spans residues 664 to 710 (YGMCVDTLFLCFLEDLERNDGSTERPYFMSGSLQKLLNKSNQTKPDK).

The protein belongs to the CTL (choline transporter-like) family.

The protein localises to the cell membrane. It is found in the mitochondrion outer membrane. The catalysed reaction is choline(out) + n H(+)(in) = choline(in) + n H(+)(out). The enzyme catalyses ethanolamine(out) + n H(+)(in) = ethanolamine(in) + n H(+)(out). Its function is as follows. Choline/H+ antiporter, mainly in mitochodria. Also acts as a low-affinity ethanolamine/H+ antiporter, regulating the supply of extracellular ethanolamine (Etn) for the CDP-Etn pathway, redistribute intracellular Etn and balance the CDP-Cho and CDP-Etn arms of the Kennedy pathway. This chain is Choline transporter-like protein 2 (slc44a2), found in Xenopus laevis (African clawed frog).